A 439-amino-acid polypeptide reads, in one-letter code: Homeobox protein ceh-32 (439 aa).

The homeobox DNA-binding region spans 183–243 (WDGEQKTHCF…KNRRQRDRAA (61 aa)). Disordered stretches follow at residues 253-293 (GVEL…SHIP), 344-365 (EEEN…KKRS), and 379-439 (VSPS…SQSE). 2 stretches are compositionally biased toward acidic residues: residues 264–274 (SDSDDDFEDSM) and 344–358 (EEEN…EADI). Polar residues predominate over residues 379 to 392 (VSPSQCSPCSNESL). Positions 398–428 (VKTEEVKKEDDEAAEEDSRSVKSETSEDPKH) are enriched in basic and acidic residues.

It belongs to the SIX/Sine oculis homeobox family. As to quaternary structure, interacts with gmn-1. In terms of tissue distribution, expressed in the posterior gonad. Expressed in some cells in the head that are probably neurons. Expressed in the dorsal and ventral neuron RMD pair and the inner labial neuron class IL1. Not expressed in BAG neurons.

The protein localises to the nucleus. Its function is as follows. Transcription factor which binds a motif with the core sequence 5'-GTATCA-3'. Plays a role in head morphogenesis. Involved in embryonic development. Required for cell specification of the RIA interneurons. May cooperate with the transcription factor vab-3 and phosphatase eya-1 to repress transcription factor ets-5 expression in non BAG neuronal cells. The chain is Homeobox protein ceh-32 from Caenorhabditis elegans.